Consider the following 701-residue polypeptide: Vacuolar protein sorting-associated protein 52 B (701 aa).

Coiled-coil stretches lie at residues 23 to 45 (FEEDSRSEDISLEGLQQELEECE) and 511 to 533 (QLDINLERLRMAVDSLILKLAKL).

The protein belongs to the VPS52 family. Component of the Golgi-associated retrograde protein (GARP) complex. Detected in pollen.

Its subcellular location is the golgi apparatus. It localises to the trans-Golgi network membrane. The protein resides in the endosome membrane. The protein localises to the golgi apparatus membrane. In terms of biological role, may be involved in retrograde transport of early and late endosomes to the late Golgi. The chain is Vacuolar protein sorting-associated protein 52 B (P2) from Arabidopsis thaliana (Mouse-ear cress).